A 51-amino-acid polypeptide reads, in one-letter code: MSSHKTFKIKRFLAKKQKQNRPIPQWIRMKTGNKIRYNSKRRHWRRTKLGL.

Belongs to the eukaryotic ribosomal protein eL39 family. In terms of assembly, interacts with IMPACT.

The protein is Large ribosomal subunit protein eL39 (RPL39) of Gallus gallus (Chicken).